A 176-amino-acid chain; its full sequence is Zinc finger A20 and AN1 domain-containing stress-associated protein 9 (176 aa).

An A20-type zinc finger spans residues alanine 16–alanine 50. Positions 22, 26, 38, 41, 117, 120, 131, 133, 138, 141, 147, and 149 each coordinate Zn(2+). The AN1-type zinc-finger motif lies at proline 111 to glycine 157.

May be involved in environmental stress response. In Arabidopsis thaliana (Mouse-ear cress), this protein is Zinc finger A20 and AN1 domain-containing stress-associated protein 9 (SAP9).